Consider the following 273-residue polypeptide: NADPH-dependent 7-cyano-7-deazaguanine reductase (273 aa).

Position 81-83 (81-83) interacts with substrate; sequence VES. An NADPH-binding site is contributed by 83-84; that stretch reads SK. C179 (thioimide intermediate) is an active-site residue. Residue D186 is the Proton donor of the active site. Residue 218 to 219 coordinates substrate; sequence AE. 247-248 lines the NADPH pocket; sequence RG.

This sequence belongs to the GTP cyclohydrolase I family. QueF type 2 subfamily. Homodimer.

The protein resides in the cytoplasm. The catalysed reaction is 7-aminomethyl-7-carbaguanine + 2 NADP(+) = 7-cyano-7-deazaguanine + 2 NADPH + 3 H(+). The protein operates within tRNA modification; tRNA-queuosine biosynthesis. Its function is as follows. Catalyzes the NADPH-dependent reduction of 7-cyano-7-deazaguanine (preQ0) to 7-aminomethyl-7-deazaguanine (preQ1). This chain is NADPH-dependent 7-cyano-7-deazaguanine reductase, found in Rickettsia bellii (strain OSU 85-389).